The chain runs to 208 residues: ATP-dependent Clp protease proteolytic subunit (208 aa).

Ser-112 (nucleophile) is an active-site residue. Residue His-137 is part of the active site.

Belongs to the peptidase S14 family. In terms of assembly, fourteen ClpP subunits assemble into 2 heptameric rings which stack back to back to give a disk-like structure with a central cavity, resembling the structure of eukaryotic proteasomes.

Its subcellular location is the cytoplasm. It catalyses the reaction Hydrolysis of proteins to small peptides in the presence of ATP and magnesium. alpha-casein is the usual test substrate. In the absence of ATP, only oligopeptides shorter than five residues are hydrolyzed (such as succinyl-Leu-Tyr-|-NHMec, and Leu-Tyr-Leu-|-Tyr-Trp, in which cleavage of the -Tyr-|-Leu- and -Tyr-|-Trp bonds also occurs).. In terms of biological role, cleaves peptides in various proteins in a process that requires ATP hydrolysis. Has a chymotrypsin-like activity. Plays a major role in the degradation of misfolded proteins. The sequence is that of ATP-dependent Clp protease proteolytic subunit from Buchnera aphidicola subsp. Acyrthosiphon pisum (strain APS) (Acyrthosiphon pisum symbiotic bacterium).